The chain runs to 503 residues: Potassium voltage-gated channel subfamily V member 1 (503 aa).

2 disordered regions span residues 1-20 (MDLS…DSGS) and 171-192 (KKDT…KGPC). At 3 to 213 (LSPRNRPLLD…EKPGSSTAAR (211 aa)) the chain is on the cytoplasmic side. The span at 10 to 20 (LLDSSSLDSGS) shows a compositional bias: low complexity. Residues 171–187 (KKDTDDQESQHESEQDF) are compositionally biased toward basic and acidic residues. A helical transmembrane segment spans residues 214–234 (IFGVISIIFVAVSIVNMALMS). The Extracellular portion of the chain corresponds to 235–241 (AELSWLN). Residues 242–262 (LQLLEILEYVCISWFTGEFVL) form a helical membrane-spanning segment. The Cytoplasmic portion of the chain corresponds to 263-279 (RFLCVKDRCHFLRKVPN). A helical transmembrane segment spans residues 280–300 (IIDLLAILPFYITLLVESLSG). The Extracellular segment spans residues 301–312 (SHTTQELENVGR). Residues 313–334 (LVQVLRLLRALRMLKLGRHSTG) traverse the membrane as a helical; Voltage-sensor segment. Residues 335-348 (LRSLGMTITQCYEE) lie on the Cytoplasmic side of the membrane. The helical transmembrane segment at 349 to 369 (VGLLLLFLSVGISIFSTIEYF) threads the bilayer. Residues 395–400 (TVGYGD) carry the Selectivity filter motif. A helical membrane pass occupies residues 410–430 (IVAFMCILSGILVLALPIAII). At 431-503 (NDRFSACYFT…RSSGGDDFWF (73 aa)) the chain is on the cytoplasmic side.

It belongs to the potassium channel family. V (TC 1.A.1.2) subfamily. Kv8.1/KCNV1 sub-subfamily. As to quaternary structure, heteromultimer with KCNB1 and KCNB2. Interacts with KCNC4 and KCND1.

The protein localises to the cell membrane. Functionally, potassium channel subunit that does not form functional channels by itself. Modulates KCNB1 and KCNB2 channel activity by shifting the threshold for inactivation to more negative values and by slowing the rate of inactivation. Can down-regulate the channel activity of KCNB1, KCNB2, KCNC4 and KCND1, possibly by trapping them in intracellular membranes. In Mus musculus (Mouse), this protein is Potassium voltage-gated channel subfamily V member 1 (Kcnv1).